We begin with the raw amino-acid sequence, 81 residues long: ATP synthase subunit C, cyanelle (81 aa).

Helical transmembrane passes span 7 to 27 (AASVIAAALAVGLAAIGPGIG) and 57 to 77 (LAFMEALTIYGLVVALALLFA).

The protein belongs to the ATPase C chain family. In terms of assembly, F-type ATPases have 2 components, F(1) - the catalytic core - and F(0) - the membrane proton channel. F(1) has five subunits: alpha(3), beta(3), gamma(1), delta(1), epsilon(1). F(0) has four main subunits: a(1), b(1), b'(1) and c(10-14). The alpha and beta chains form an alternating ring which encloses part of the gamma chain. F(1) is attached to F(0) by a central stalk formed by the gamma and epsilon chains, while a peripheral stalk is formed by the delta, b and b' chains.

The protein localises to the plastid. It is found in the cyanelle thylakoid membrane. Functionally, f(1)F(0) ATP synthase produces ATP from ADP in the presence of a proton or sodium gradient. F-type ATPases consist of two structural domains, F(1) containing the extramembraneous catalytic core and F(0) containing the membrane proton channel, linked together by a central stalk and a peripheral stalk. During catalysis, ATP synthesis in the catalytic domain of F(1) is coupled via a rotary mechanism of the central stalk subunits to proton translocation. In terms of biological role, key component of the F(0) channel; it plays a direct role in translocation across the membrane. A homomeric c-ring of between 10-14 subunits forms the central stalk rotor element with the F(1) delta and epsilon subunits. The protein is ATP synthase subunit C, cyanelle of Cyanophora paradoxa.